Reading from the N-terminus, the 234-residue chain is t-SNARE protein aex-4 (234 aa).

T-SNARE coiled-coil homology domains lie at 37–99 (AKLN…ITAM) and 170–232 (DAIE…VKKL).

This sequence belongs to the SNAP-25 family. As to expression, expressed in intestinal cells.

It is found in the cell membrane. In terms of biological role, t-SNARE protein which regulates the secretion of aex-5 from intestinal cells. Involved in the defecation motor program, which is a coordinated series of three muscle contractions that occurs every 45 seconds. This is t-SNARE protein aex-4 from Caenorhabditis elegans.